A 419-amino-acid polypeptide reads, in one-letter code: UDP-N-acetylglucosamine 1-carboxyvinyltransferase (419 aa).

Residue 22–23 coordinates phosphoenolpyruvate; that stretch reads KN. Arg93 contacts UDP-N-acetyl-alpha-D-glucosamine. Cys117 serves as the catalytic Proton donor. The residue at position 117 (Cys117) is a 2-(S-cysteinyl)pyruvic acid O-phosphothioketal. UDP-N-acetyl-alpha-D-glucosamine contacts are provided by Asp306 and Ile328.

Belongs to the EPSP synthase family. MurA subfamily.

It localises to the cytoplasm. The enzyme catalyses phosphoenolpyruvate + UDP-N-acetyl-alpha-D-glucosamine = UDP-N-acetyl-3-O-(1-carboxyvinyl)-alpha-D-glucosamine + phosphate. Its pathway is cell wall biogenesis; peptidoglycan biosynthesis. Its function is as follows. Cell wall formation. Adds enolpyruvyl to UDP-N-acetylglucosamine. In Magnetococcus marinus (strain ATCC BAA-1437 / JCM 17883 / MC-1), this protein is UDP-N-acetylglucosamine 1-carboxyvinyltransferase.